A 92-amino-acid chain; its full sequence is MTRSLKKNPFVANHLLRKINKLNTKAEKDIILTWSRASTIIPTMIGHTIAIHNGKEHLPIYITDRMVGHKLGEFSPTLNFRGHAKNDNRSRR.

Belongs to the universal ribosomal protein uS19 family.

The protein localises to the plastid. The protein resides in the chloroplast. Its function is as follows. Protein S19 forms a complex with S13 that binds strongly to the 16S ribosomal RNA. The chain is Small ribosomal subunit protein uS19c from Phaseolus angularis (Azuki bean).